Here is a 388-residue protein sequence, read N- to C-terminus: Succinate--CoA ligase [ADP-forming] subunit beta (388 aa).

The ATP-grasp domain occupies 9-245 (KELLAKYGLP…KSQENERELK (237 aa)). Residues Lys46, 53–55 (GRG), Glu100, Tyr103, and Glu108 each bind ATP. Mg(2+)-binding residues include Asn200 and Asp214. Residues Asn265 and 322–324 (GIV) each bind substrate.

The protein belongs to the succinate/malate CoA ligase beta subunit family. As to quaternary structure, heterotetramer of two alpha and two beta subunits. Mg(2+) is required as a cofactor.

It carries out the reaction succinate + ATP + CoA = succinyl-CoA + ADP + phosphate. It catalyses the reaction GTP + succinate + CoA = succinyl-CoA + GDP + phosphate. The protein operates within carbohydrate metabolism; tricarboxylic acid cycle; succinate from succinyl-CoA (ligase route): step 1/1. Functionally, succinyl-CoA synthetase functions in the citric acid cycle (TCA), coupling the hydrolysis of succinyl-CoA to the synthesis of either ATP or GTP and thus represents the only step of substrate-level phosphorylation in the TCA. The beta subunit provides nucleotide specificity of the enzyme and binds the substrate succinate, while the binding sites for coenzyme A and phosphate are found in the alpha subunit. The polypeptide is Succinate--CoA ligase [ADP-forming] subunit beta (Laribacter hongkongensis (strain HLHK9)).